The sequence spans 270 residues: 4-hydroxy-tetrahydrodipicolinate reductase (270 aa).

NAD(+) is bound by residues 11-16 (GAGGRM) and glutamate 37. Arginine 38 is a binding site for NADP(+). NAD(+)-binding positions include 101 to 103 (GTT) and 125 to 128 (APNM). Histidine 158 acts as the Proton donor/acceptor in catalysis. Histidine 159 serves as a coordination point for (S)-2,3,4,5-tetrahydrodipicolinate. Residue lysine 162 is the Proton donor of the active site. A (S)-2,3,4,5-tetrahydrodipicolinate-binding site is contributed by 168–169 (GT).

Belongs to the DapB family.

It is found in the cytoplasm. It catalyses the reaction (S)-2,3,4,5-tetrahydrodipicolinate + NAD(+) + H2O = (2S,4S)-4-hydroxy-2,3,4,5-tetrahydrodipicolinate + NADH + H(+). It carries out the reaction (S)-2,3,4,5-tetrahydrodipicolinate + NADP(+) + H2O = (2S,4S)-4-hydroxy-2,3,4,5-tetrahydrodipicolinate + NADPH + H(+). It participates in amino-acid biosynthesis; L-lysine biosynthesis via DAP pathway; (S)-tetrahydrodipicolinate from L-aspartate: step 4/4. Catalyzes the conversion of 4-hydroxy-tetrahydrodipicolinate (HTPA) to tetrahydrodipicolinate. The chain is 4-hydroxy-tetrahydrodipicolinate reductase from Shewanella sp. (strain MR-4).